The sequence spans 147 residues: Hemoglobin subunit beta (147 aa).

At Val-2 the chain carries N-acetylvaline. Residues 3–147 form the Globin domain; it reads HLTGDEKAAV…VANALAHKYH (145 aa). Position 13 is a phosphothreonine (Thr-13). A Phosphoserine modification is found at Ser-45. Lys-60 carries the post-translational modification N6-acetyllysine. Residue His-64 participates in heme b binding. N6-acetyllysine is present on Lys-83. His-93 contacts heme b. Cys-94 bears the S-nitrosocysteine mark. N6-acetyllysine is present on Lys-145.

Belongs to the globin family. In terms of assembly, heterotetramer of two alpha chains and two beta chains. As to expression, red blood cells.

In terms of biological role, involved in oxygen transport from the lung to the various peripheral tissues. This Saimiri sciureus (Common squirrel monkey) protein is Hemoglobin subunit beta (HBB).